A 434-amino-acid chain; its full sequence is Bestrophin homolog 12 (434 aa).

4 helical membrane-spanning segments follow: residues 31-51 (KVILHEFLMTAGAYFGVFLVF), 76-96 (VCIPMQMMLAFFIATVADQWE), 244-264 (IPIPLAYPQAVFLAVRIYFFF), and 278-298 (WALSHWGFPLLTTLQFIFLVG).

It belongs to the anion channel-forming bestrophin (TC 1.A.46) family. Calcium-sensitive chloride channel subfamily. Forms oligomers.

It is found in the cell membrane. Functionally, forms chloride channels. The protein is Bestrophin homolog 12 (best-12) of Caenorhabditis elegans.